The sequence spans 313 residues: Protoheme IX farnesyltransferase (313 aa).

A run of 9 helical transmembrane segments spans residues 33-53 (IALM…PVML), 59-79 (MPSW…AGSA), 107-127 (VEPA…TLMF), 129-149 (LLVN…YVFV), 162-182 (IVIG…AVTG), 188-208 (AVLL…ALAI), 212-232 (DDYA…EVVT), 252-272 (VADI…WFVA), and 292-312 (LFHM…AAAL).

The protein belongs to the UbiA prenyltransferase family. Protoheme IX farnesyltransferase subfamily.

Its subcellular location is the cell membrane. It carries out the reaction heme b + (2E,6E)-farnesyl diphosphate + H2O = Fe(II)-heme o + diphosphate. Its pathway is porphyrin-containing compound metabolism; heme O biosynthesis; heme O from protoheme: step 1/1. Functionally, converts heme B (protoheme IX) to heme O by substitution of the vinyl group on carbon 2 of heme B porphyrin ring with a hydroxyethyl farnesyl side group. The chain is Protoheme IX farnesyltransferase from Parafrankia sp. (strain EAN1pec).